We begin with the raw amino-acid sequence, 443 residues long: ATP-dependent protease ATPase subunit HslU (443 aa).

Residues Ile-18, 60-65 (GVGKTE), Asp-256, Glu-321, and Arg-393 contribute to the ATP site.

This sequence belongs to the ClpX chaperone family. HslU subfamily. As to quaternary structure, a double ring-shaped homohexamer of HslV is capped on each side by a ring-shaped HslU homohexamer. The assembly of the HslU/HslV complex is dependent on binding of ATP.

The protein resides in the cytoplasm. ATPase subunit of a proteasome-like degradation complex; this subunit has chaperone activity. The binding of ATP and its subsequent hydrolysis by HslU are essential for unfolding of protein substrates subsequently hydrolyzed by HslV. HslU recognizes the N-terminal part of its protein substrates and unfolds these before they are guided to HslV for hydrolysis. In Escherichia coli O157:H7 (strain EC4115 / EHEC), this protein is ATP-dependent protease ATPase subunit HslU.